The primary structure comprises 321 residues: Quinol oxidase subunit 2 (321 aa).

Residues 1 to 25 (MIFLFRALKPLLVLALLTVVFVLGG) form the signal peptide. Residue C26 is the site of N-palmitoyl cysteine attachment. C26 is lipidated: S-diacylglycerol cysteine. The next 2 helical transmembrane spans lie at 49–69 (SIGF…IILV) and 90–110 (TFLE…LSVP). The segment at 294 to 321 (QAVSPHSKTDPFENVKKNEFKKSDDTEE) is disordered. Over residues 300–321 (SKTDPFENVKKNEFKKSDDTEE) the composition is skewed to basic and acidic residues.

This sequence belongs to the cytochrome c oxidase subunit 2 family. As to quaternary structure, interacts with FloT.

The protein localises to the cell membrane. The protein resides in the membrane raft. The catalysed reaction is 2 a quinol + O2 = 2 a quinone + 2 H2O. In terms of biological role, catalyzes quinol oxidation with the concomitant reduction of oxygen to water. Major component for energy conversion during vegetative growth. Subunit II transfers the electrons from a quinol to the binuclear center of the catalytic subunit I. The chain is Quinol oxidase subunit 2 (qoxA) from Bacillus subtilis (strain 168).